Here is a 232-residue protein sequence, read N- to C-terminus: UPF0758 protein EF_2926 (232 aa).

The region spanning 107 to 229 (KVTSSQQVAQ…YISLREENFF (123 aa)) is the MPN domain. Zn(2+) contacts are provided by histidine 178, histidine 180, and aspartate 191. The short motif at 178-191 (HNHPSGNPTPSPQD) is the JAMM motif element.

Belongs to the UPF0758 family.

The chain is UPF0758 protein EF_2926 from Enterococcus faecalis (strain ATCC 700802 / V583).